The chain runs to 491 residues: 2,3-bisphosphoglycerate-independent phosphoglycerate mutase (491 aa).

Residues Asp-11 and Ser-61 each coordinate Mn(2+). Ser-61 serves as the catalytic Phosphoserine intermediate. Residues His-118, 147–148 (RD), Arg-177, Arg-183, 248–251 (RSDR), and Lys-320 each bind substrate. Mn(2+) is bound by residues Asp-386, His-390, Asp-427, His-428, and His-445.

It belongs to the BPG-independent phosphoglycerate mutase family. As to quaternary structure, monomer. Requires Mn(2+) as cofactor.

It carries out the reaction (2R)-2-phosphoglycerate = (2R)-3-phosphoglycerate. It participates in carbohydrate degradation; glycolysis; pyruvate from D-glyceraldehyde 3-phosphate: step 3/5. Its function is as follows. Catalyzes the interconversion of 2-phosphoglycerate and 3-phosphoglycerate. This chain is 2,3-bisphosphoglycerate-independent phosphoglycerate mutase, found in Aliarcobacter butzleri (strain RM4018) (Arcobacter butzleri).